An 831-amino-acid chain; its full sequence is uncharacterized protein (831 aa).

Histidine 787 (tele-phosphohistidine intermediate) is an active-site residue.

The protein belongs to the PEP-utilizing enzyme family.

This is an uncharacterized protein from Bacillus subtilis (strain 168).